The primary structure comprises 252 residues: Phosphate import ATP-binding protein PstB (252 aa).

The ABC transporter domain occupies 6 to 247 (ITIEKLNLYY…PKDERTEKYI (242 aa)). 38-45 (GPSGCGKS) lines the ATP pocket.

It belongs to the ABC transporter superfamily. Phosphate importer (TC 3.A.1.7) family. The complex is composed of two ATP-binding proteins (PstB), two transmembrane proteins (PstC and PstA) and a solute-binding protein (PstS).

The protein localises to the cell membrane. The catalysed reaction is phosphate(out) + ATP + H2O = ADP + 2 phosphate(in) + H(+). In terms of biological role, part of the ABC transporter complex PstSACB involved in phosphate import. Responsible for energy coupling to the transport system. This Lactobacillus delbrueckii subsp. bulgaricus (strain ATCC 11842 / DSM 20081 / BCRC 10696 / JCM 1002 / NBRC 13953 / NCIMB 11778 / NCTC 12712 / WDCM 00102 / Lb 14) protein is Phosphate import ATP-binding protein PstB.